The chain runs to 141 residues: Holo-[acyl-carrier-protein] synthase (141 aa).

Positions 8 and 61 each coordinate Mg(2+).

This sequence belongs to the P-Pant transferase superfamily. AcpS family. Mg(2+) is required as a cofactor.

Its subcellular location is the cytoplasm. The enzyme catalyses apo-[ACP] + CoA = holo-[ACP] + adenosine 3',5'-bisphosphate + H(+). Functionally, transfers the 4'-phosphopantetheine moiety from coenzyme A to a Ser of acyl-carrier-protein. The polypeptide is Holo-[acyl-carrier-protein] synthase (Rhodopseudomonas palustris (strain HaA2)).